The following is a 311-amino-acid chain: Coproporphyrin III ferrochelatase 1 (311 aa).

Residues Y12, R29, 45 to 46 (RY), S53, and Y124 each bind Fe-coproporphyrin III. Residues H182 and E263 each coordinate Fe(2+).

Belongs to the ferrochelatase family.

Its subcellular location is the cytoplasm. The enzyme catalyses Fe-coproporphyrin III + 2 H(+) = coproporphyrin III + Fe(2+). Its pathway is porphyrin-containing compound metabolism; protoheme biosynthesis. Its function is as follows. Involved in coproporphyrin-dependent heme b biosynthesis. Catalyzes the insertion of ferrous iron into coproporphyrin III to form Fe-coproporphyrin III. In Bacillus anthracis, this protein is Coproporphyrin III ferrochelatase 1.